The sequence spans 98 residues: uncharacterized protein (98 aa).

2 consecutive transmembrane segments (helical) span residues 8 to 28 and 73 to 93; these read LILK…HYFL and LWFI…SISL.

Its subcellular location is the membrane. This is an uncharacterized protein from Saccharomyces cerevisiae (strain ATCC 204508 / S288c) (Baker's yeast).